We begin with the raw amino-acid sequence, 445 residues long: 6-phosphogluconate dehydrogenase, decarboxylating (445 aa).

Residues 1–4, 22–24, 63–65, and Asn91 contribute to the NADP(+) site; these read AVMG, NRS, and VKA. Substrate contacts are provided by residues Asn91 and 117-119; that span reads SGG. Lys172 functions as the Proton acceptor in the catalytic mechanism. 175–176 serves as a coordination point for substrate; sequence HN. The active-site Proton donor is the Glu179. Residues Tyr180, Lys249, Arg276, Arg434, and His440 each contribute to the substrate site.

It belongs to the 6-phosphogluconate dehydrogenase family. As to quaternary structure, homodimer.

The catalysed reaction is 6-phospho-D-gluconate + NADP(+) = D-ribulose 5-phosphate + CO2 + NADPH. It functions in the pathway carbohydrate degradation; pentose phosphate pathway; D-ribulose 5-phosphate from D-glucose 6-phosphate (oxidative stage): step 3/3. Functionally, catalyzes the oxidative decarboxylation of 6-phosphogluconate to ribulose 5-phosphate and CO(2), with concomitant reduction of NADP to NADPH. The protein is 6-phosphogluconate dehydrogenase, decarboxylating (gnd) of Shigella sonnei.